A 214-amino-acid chain; its full sequence is Holliday junction branch migration complex subunit RuvA (214 aa).

The interval Met1–Ser63 is domain I. The tract at residues Ser64–Pro142 is domain II. The interval Ala143 to Gln153 is flexible linker. The domain III stretch occupies residues Gln153–Gly214.

It belongs to the RuvA family. In terms of assembly, homotetramer. Forms an RuvA(8)-RuvB(12)-Holliday junction (HJ) complex. HJ DNA is sandwiched between 2 RuvA tetramers; dsDNA enters through RuvA and exits via RuvB. An RuvB hexamer assembles on each DNA strand where it exits the tetramer. Each RuvB hexamer is contacted by two RuvA subunits (via domain III) on 2 adjacent RuvB subunits; this complex drives branch migration. In the full resolvosome a probable DNA-RuvA(4)-RuvB(12)-RuvC(2) complex forms which resolves the HJ.

The protein resides in the cytoplasm. The RuvA-RuvB-RuvC complex processes Holliday junction (HJ) DNA during genetic recombination and DNA repair, while the RuvA-RuvB complex plays an important role in the rescue of blocked DNA replication forks via replication fork reversal (RFR). RuvA specifically binds to HJ cruciform DNA, conferring on it an open structure. The RuvB hexamer acts as an ATP-dependent pump, pulling dsDNA into and through the RuvAB complex. HJ branch migration allows RuvC to scan DNA until it finds its consensus sequence, where it cleaves and resolves the cruciform DNA. The chain is Holliday junction branch migration complex subunit RuvA from Arthrobacter sp. (strain FB24).